A 469-amino-acid chain; its full sequence is Probable monogalactosyldiacylglycerol synthase 2, chloroplastic (469 aa).

The N-terminal 42 residues, 1 to 42 (MVISVATPRRSIRDAVLGGVLGAGGRQLYQPLRCAFYDGAAG), are a transit peptide targeting the chloroplast.

It belongs to the glycosyltransferase 28 family.

Its subcellular location is the plastid. It is found in the chloroplast membrane. It catalyses the reaction a 1,2-diacyl-sn-glycerol + UDP-alpha-D-galactose = a 1,2-diacyl-3-O-(beta-D-galactosyl)-sn-glycerol + UDP + H(+). In terms of biological role, involved in the synthesis of the major structural component of photosynthetic membranes. This chain is Probable monogalactosyldiacylglycerol synthase 2, chloroplastic (MGD2), found in Oryza sativa subsp. japonica (Rice).